Consider the following 851-residue polypeptide: MAVAYPTDKHVVHEETGKGLEVYSIWTAISNGKMPSNKQLRGLGSSLTDGAKSVAKERQKKISDPARKFFSDFSKLIDNSFNVFAKKNEGDLLQNAIYELSQAEGSTNVNEVWNDITEDMQSQDFSTEDLKQLFLLIFNNGKLRTLLQNAIVLLGQQTTNVASKKLNEQDGKKSDNLRNGVNKVKQNMRNGASARDQAREQGSKAKDKIKNDPDAQKAKEETKQKLQDLYEEFKSVAVDLQGDPKYQHPVRSLLNLIDKFIDKLSEQSGNVTADTNEHYDRAMQYLKQLVENILNRSLDNLIDTLKQVQHDAENDEELKDWLESTRQFVRKVLLKKGYAKSDASDKEFNKLRDKGDELLNGRYKKRWQQLSSEVKKISDSASSDKDVKQLFSNYKNIYGDLIKREGGQISLKTSMCLEILRLGVPVILEKMQYFPIPRLEIEQPDFDVVLENLNLQTANVLPKLAEFRNNNFVRFSPYANITSFRENMINVHLSNIQCDLKDVNYYIKRKQGFPTFTDLGVVDLLIGKQGMVVNLTLSSFSNTMFENELPDSFFKVEDVKVDIHHIKLKIRKSRHRLLLAFLKPSLMTYVRSTVARSMELSIRHAFEQVDREWYEIHKEAKSEIEKDSSKPTEDQESKLKVYGRVAYSRISNLHKSSKEKGKDSQVRVALHKENTALNNIVLPSGNLQRSEEKRRAALSGSTWHSPAFNIFGVDDSEDSDSPWATDRGSRLYQRTKGSVKSRESRLKKEKHKNRPASKGTYTTYTSSEERQRSTEDPLSHDTLSRTILNDQIVKGNVTEIPLPPLAVNEKRASVAVSSIPSFGDDQHDIELLNSTDPRKNRILYNQPPAVA.

3 stretches are compositionally biased toward basic and acidic residues: residues 165–176 (KLNEQDGKKSDN), 196–223 (DQAR…EETK), and 767–781 (SEER…LSHD). Disordered regions lie at residues 165–223 (KLNE…EETK) and 714–781 (DDSE…LSHD).

Post-translationally, palmitoylated.

This Schizosaccharomyces pombe (strain 972 / ATCC 24843) (Fission yeast) protein is Putative cell signaling protein.